Consider the following 187-residue polypeptide: MNLQHHFLIAMPSLQDPHFMRSVIYICEHNKEGAMGLVINKPMEQFTVETVLKKLKISPTPRDPSIRLDKAVLAGGPLAEDRGFILHSPQEGFGSSIPISPDTMITTSKDVLETLGTPEQPKNLLVALGYAGWQQGQLEQELLDNAWLTIEADTHILFNTPIAERWQAAANKLGINIFNIAPQAGHA.

It belongs to the UPF0301 (AlgH) family.

This Yersinia enterocolitica serotype O:8 / biotype 1B (strain NCTC 13174 / 8081) protein is UPF0301 protein YE3428.